A 165-amino-acid chain; its full sequence is Putative universal stress protein SH1215 (165 aa).

It belongs to the universal stress protein A family.

It is found in the cytoplasm. This Staphylococcus haemolyticus (strain JCSC1435) protein is Putative universal stress protein SH1215.